Reading from the N-terminus, the 701-residue chain is Glycine--tRNA ligase beta subunit (701 aa).

The protein belongs to the class-II aminoacyl-tRNA synthetase family. Tetramer of two alpha and two beta subunits.

Its subcellular location is the cytoplasm. The enzyme catalyses tRNA(Gly) + glycine + ATP = glycyl-tRNA(Gly) + AMP + diphosphate. In Anaeromyxobacter dehalogenans (strain 2CP-C), this protein is Glycine--tRNA ligase beta subunit.